Here is a 430-residue protein sequence, read N- to C-terminus: Glutamate-1-semialdehyde 2,1-aminomutase (430 aa).

Lys267 is modified (N6-(pyridoxal phosphate)lysine).

The protein belongs to the class-III pyridoxal-phosphate-dependent aminotransferase family. HemL subfamily. As to quaternary structure, homodimer. It depends on pyridoxal 5'-phosphate as a cofactor.

The protein localises to the cytoplasm. The enzyme catalyses (S)-4-amino-5-oxopentanoate = 5-aminolevulinate. It participates in porphyrin-containing compound metabolism; protoporphyrin-IX biosynthesis; 5-aminolevulinate from L-glutamyl-tRNA(Glu): step 2/2. The protein is Glutamate-1-semialdehyde 2,1-aminomutase of Cytophaga hutchinsonii (strain ATCC 33406 / DSM 1761 / CIP 103989 / NBRC 15051 / NCIMB 9469 / D465).